A 513-amino-acid chain; its full sequence is Light-independent protochlorophyllide reductase subunit B (513 aa).

Asp-36 provides a ligand contact to [4Fe-4S] cluster. Asp-299 acts as the Proton donor in catalysis. 434–435 (GM) lines the substrate pocket.

This sequence belongs to the ChlB/BchB/BchZ family. Protochlorophyllide reductase is composed of three subunits; ChlL, ChlN and ChlB. Forms a heterotetramer of two ChlB and two ChlN subunits. [4Fe-4S] cluster serves as cofactor.

It localises to the plastid. The protein resides in the chloroplast. It catalyses the reaction chlorophyllide a + oxidized 2[4Fe-4S]-[ferredoxin] + 2 ADP + 2 phosphate = protochlorophyllide a + reduced 2[4Fe-4S]-[ferredoxin] + 2 ATP + 2 H2O. It participates in porphyrin-containing compound metabolism; chlorophyll biosynthesis (light-independent). Functionally, component of the dark-operative protochlorophyllide reductase (DPOR) that uses Mg-ATP and reduced ferredoxin to reduce ring D of protochlorophyllide (Pchlide) to form chlorophyllide a (Chlide). This reaction is light-independent. The NB-protein (ChlN-ChlB) is the catalytic component of the complex. This Zygnema circumcarinatum (Green alga) protein is Light-independent protochlorophyllide reductase subunit B.